Consider the following 529-residue polypeptide: DNA-binding protein (529 aa).

Basic and acidic residues predominate over residues 1–17; the sequence is MASREEEQRETTPERGR. 2 disordered regions span residues 1 to 108 and 125 to 168; these read MASR…VDSE and PVLI…SEST. The segment covering 129 to 139 has biased composition (basic residues); the sequence is KHGKGGKRTVR. Residues 140 to 155 are compositionally biased toward basic and acidic residues; the sequence is RLNEDDPVARGMRTQE. A compositionally biased stretch (acidic residues) spans 156–165; sequence EKEESSEAES. Position 195 is a phosphotyrosine; by host (Tyr195). Cys284 and His286 together coordinate Zn(2+). The interval 297 to 331 is flexible loop; it reads IEMDVTSENGQRALKEQSSKAKIVKNRWGRNVVQI. Zn(2+) is bound by residues Cys339, Cys355, Cys396, Cys398, Cys450, and Cys467. Residues 513–529 form a C-terminal arm, DBP binding region; it reads VSLPVAHSDARQNPFDF.

This sequence belongs to the adenoviridae E2A DNA-binding protein family. Homomultimerizes on viral ssDNA bound to pTP. Forms an initiation complex with viral polymerase, pTP and hosts NFIA and POU2F1/OCT1. Interacts with host SRCAP.

The protein localises to the host nucleus. Its function is as follows. Plays a role in the elongation phase of viral strand displacement replication by unwinding the template in an ATP-independent fashion, employing its capacity to form multimers. Also enhances the rate of initiation. Released from template upon second strand synthesis. Assembles in complex with viral pTP, viral pol, host NFIA and host POU2F1/OCT1 on viral origin of replication. Covers the whole ssDNA genome during synthesis. The complementary strand synthesis induces its release from DNA template. May inhibit cellular transcription mediated by the interaction between host SRCAP and CBP. This Human adenovirus C serotype 2 (HAdV-2) protein is DNA-binding protein.